The primary structure comprises 891 residues: 26S proteasome non-ATPase regulatory subunit 2 homolog B (891 aa).

The disordered stretch occupies residues Met1–Asp43. Basic and acidic residues predominate over residues Ala14–Glu37. PC repeat units lie at residues Ser414–Ala447, Gly448–Ile484, Gly485–Val519, Phe522–Gly556, Leu565–Lys594, Leu674–Met705, and Ala724–Ser739.

Belongs to the proteasome subunit S2 family. As to quaternary structure, component of the 19S regulatory particle (RP/PA700) base subcomplex of the 26S proteasome. The 26S proteasome is composed of a core protease (CP), known as the 20S proteasome, capped at one or both ends by the 19S regulatory particle (RP/PA700). The RP/PA700 complex is composed of at least 17 different subunits in two subcomplexes, the base and the lid, which form the portions proximal and distal to the 20S proteolytic core, respectively. In terms of processing, ubiquitinated. Expressed in stems, leaves, buds, flowers, siliques and developing seeds.

Functionally, acts as a regulatory subunit of the 26 proteasome which is involved in the ATP-dependent degradation of ubiquitinated proteins. The chain is 26S proteasome non-ATPase regulatory subunit 2 homolog B (RPN1B) from Arabidopsis thaliana (Mouse-ear cress).